The primary structure comprises 716 residues: 1,4-alpha-glucan branching enzyme GlgB (716 aa).

The active-site Nucleophile is Asp-399. The active-site Proton donor is Glu-452.

Belongs to the glycosyl hydrolase 13 family. GlgB subfamily. As to quaternary structure, monomer.

It carries out the reaction Transfers a segment of a (1-&gt;4)-alpha-D-glucan chain to a primary hydroxy group in a similar glucan chain.. It functions in the pathway glycan biosynthesis; glycogen biosynthesis. Its function is as follows. Catalyzes the formation of the alpha-1,6-glucosidic linkages in glycogen by scission of a 1,4-alpha-linked oligosaccharide from growing alpha-1,4-glucan chains and the subsequent attachment of the oligosaccharide to the alpha-1,6 position. The protein is 1,4-alpha-glucan branching enzyme GlgB of Rhodopseudomonas palustris (strain ATCC BAA-98 / CGA009).